Here is a 357-residue protein sequence, read N- to C-terminus: Velvet complex subunit 2 (357 aa).

The Velvet domain maps to 32-341 (RRAERKYKLE…AQQGIKIPIR (310 aa)).

It belongs to the velvet family. VelB subfamily. In terms of assembly, component of the heterotrimeric velvet complex composed of LAE1, VEL1 and VEL2; VEL1A acting as a bridging protein between LAE1 and VEL2. Forms a heterodimeric complex with VOS1; the formation of the VEL2-VOS1 complex is light-dependent.

Its subcellular location is the nucleus. It localises to the cytoplasm. Functionally, component of the velvet transcription factor complex that controls sexual/asexual developmental ratio in response to light, promoting sexual development in the darkness while stimulating asexual sporulation under illumination. The velvet complex acts as a global regulator for secondary metabolite gene expression. Component of the VEL2-VOS1 heterodimeric complex that plays a dual role in activating genes associated with spore maturation and repressing certain development-associated genes. The complex binds DNA through the DNA-binding domain of VOS1 that recognizes an 11-nucleotide consensus sequence 5'-CTGGCCGCGGC-3' consisting of two motifs in the promoters of key developmental regulatory genes. The VEL2-VOS1 complex is required for normal pseudothecium development and regulates asexual spore compartmentalization, pigmentation and germination. The polypeptide is Velvet complex subunit 2 (Cochliobolus heterostrophus (strain C5 / ATCC 48332 / race O) (Southern corn leaf blight fungus)).